We begin with the raw amino-acid sequence, 360 residues long: NAD(P)H-quinone oxidoreductase subunit 1, chloroplastic (360 aa).

Transmembrane regions (helical) follow at residues 27-47 (VWIFVPIFSLVLGIITGVLVI), 98-118 (FSIGPSIAVISILLSYSVIPF), 129-149 (IGIFLWIAISSIAPIGLLMSG), 165-185 (AAQSISYEIPLTLCVLSISLL), 203-223 (FWGWNLWRQPIGFIIFLISSL), 253-273 (FGLFYVASYLNLLISALFVTI), 297-317 (VFGTTIGIFITLAKTYLVLVI), and 340-360 (FLLPISLGNLLLTTSFQLLSL).

The protein belongs to the complex I subunit 1 family. In terms of assembly, NDH is composed of at least 16 different subunits, 5 of which are encoded in the nucleus.

It localises to the plastid. It is found in the chloroplast thylakoid membrane. The enzyme catalyses a plastoquinone + NADH + (n+1) H(+)(in) = a plastoquinol + NAD(+) + n H(+)(out). It carries out the reaction a plastoquinone + NADPH + (n+1) H(+)(in) = a plastoquinol + NADP(+) + n H(+)(out). In terms of biological role, NDH shuttles electrons from NAD(P)H:plastoquinone, via FMN and iron-sulfur (Fe-S) centers, to quinones in the photosynthetic chain and possibly in a chloroplast respiratory chain. The immediate electron acceptor for the enzyme in this species is believed to be plastoquinone. Couples the redox reaction to proton translocation, and thus conserves the redox energy in a proton gradient. This Draba nemorosa (Woodland whitlowgrass) protein is NAD(P)H-quinone oxidoreductase subunit 1, chloroplastic.